We begin with the raw amino-acid sequence, 983 residues long: Ephrin type-A receptor 3 (983 aa).

The first 20 residues, 1–20 (MDCQLSILLLLSCSVLDSFG), serve as a signal peptide directing secretion. Topologically, residues 21 to 541 (ELIPQPSNEV…SFSISGESSQ (521 aa)) are extracellular. An Eph LBD domain is found at 29–207 (EVNLLDSKTI…YFKKCPFTVK (179 aa)). Residues asparagine 232, asparagine 337, asparagine 391, asparagine 404, and asparagine 493 are each glycosylated (N-linked (GlcNAc...) asparagine). Fibronectin type-III domains lie at 325–435 (PPSS…TNQA) and 436–531 (APSP…TSPD). A helical membrane pass occupies residues 542 to 565 (VVMIAISAAVAIILLTVVIYVLIG). Residues 566–983 (RFCGYKSKHG…TQSKNGPVPV (418 aa)) are Cytoplasmic-facing. Phosphotyrosine; by autocatalysis occurs at positions 596 and 602. Residues 621-882 (ISIDKVVGAG…QIVSILDKLI (262 aa)) form the Protein kinase domain. Residues 628-633 (GAGEFG), lysine 653, and 700-706 (EYMENGS) each bind ATP. A Phosphotyrosine; by autocatalysis modification is found at tyrosine 701. Aspartate 746 acts as the Proton acceptor in catalysis. Residue 750–751 (RN) coordinates ATP. The residue at position 779 (tyrosine 779) is a Phosphotyrosine; by autocatalysis. The SAM domain occupies 911–975 (TTFRTTGDWL…ISSIKALETQ (65 aa)). Phosphotyrosine is present on tyrosine 937. A PDZ-binding motif is present at residues 981–983 (VPV).

This sequence belongs to the protein kinase superfamily. Tyr protein kinase family. Ephrin receptor subfamily. In terms of assembly, heterotetramer upon binding of the ligand. The heterotetramer is composed of an ephrin dimer and a receptor dimer. Oligomerization is probably required to induce biological responses. Forms a ternary EFNA5-EPHA3-ADAM10 complex mediating EFNA5 extracellular domain shedding by ADAM10 which regulates the EFNA5-EPHA3 complex internalization and function. Interacts with NCK1 (via SH2 domain); mediates EFNA5-EPHA3 signaling. Interacts (phosphorylated) with PTPN1; dephosphorylates EPHA3 and may regulate its trafficking and function. Interacts (phosphorylated) with CRK; mediates EFNA5-EPHA3 signaling through RHOA GTPase activation. In terms of processing, autophosphorylates upon activation by EFNA5. Phosphorylation on Tyr-602 mediates interaction with NCK1. Dephosphorylated by PTPN1. Widely expressed. Highest level in placenta.

The protein localises to the cell membrane. It is found in the secreted. The enzyme catalyses L-tyrosyl-[protein] + ATP = O-phospho-L-tyrosyl-[protein] + ADP + H(+). In terms of biological role, receptor tyrosine kinase which binds promiscuously membrane-bound ephrin family ligands residing on adjacent cells, leading to contact-dependent bidirectional signaling into neighboring cells. The signaling pathway downstream of the receptor is referred to as forward signaling while the signaling pathway downstream of the ephrin ligand is referred to as reverse signaling. Highly promiscuous for ephrin-A ligands it binds preferentially EFNA5. Upon activation by EFNA5 regulates cell-cell adhesion, cytoskeletal organization and cell migration. Plays a role in cardiac cells migration and differentiation and regulates the formation of the atrioventricular canal and septum during development probably through activation by EFNA1. Involved in the retinotectal mapping of neurons. May also control the segregation but not the guidance of motor and sensory axons during neuromuscular circuit development. In Homo sapiens (Human), this protein is Ephrin type-A receptor 3 (EPHA3).